Consider the following 179-residue polypeptide: Inner membrane-spanning protein YciB (179 aa).

The next 5 helical transmembrane spans lie at 22 to 42 (IYVASGALIVATALALVFTWF), 50 to 70 (MTLITFLMVLVFGTLTLVFHN), 76 to 96 (WKVTIIYTLFALALLISQLVL), 121 to 141 (LAWAVFFLVCGLANIYVAFWL), and 149 to 169 (FKVFGLTALTLVFTLLSGVYI).

It belongs to the YciB family.

It localises to the cell inner membrane. Plays a role in cell envelope biogenesis, maintenance of cell envelope integrity and membrane homeostasis. The chain is Inner membrane-spanning protein YciB from Serratia proteamaculans (strain 568).